Reading from the N-terminus, the 370-residue chain is Chorismate synthase (370 aa).

Arg48 contributes to the NADP(+) binding site. FMN-binding positions include 125–127 (RSS), 241–242 (NA), Gly285, 300–304 (KPTSS), and Arg326.

Belongs to the chorismate synthase family. As to quaternary structure, homotetramer. It depends on FMNH2 as a cofactor.

It carries out the reaction 5-O-(1-carboxyvinyl)-3-phosphoshikimate = chorismate + phosphate. Its pathway is metabolic intermediate biosynthesis; chorismate biosynthesis; chorismate from D-erythrose 4-phosphate and phosphoenolpyruvate: step 7/7. In terms of biological role, catalyzes the anti-1,4-elimination of the C-3 phosphate and the C-6 proR hydrogen from 5-enolpyruvylshikimate-3-phosphate (EPSP) to yield chorismate, which is the branch point compound that serves as the starting substrate for the three terminal pathways of aromatic amino acid biosynthesis. This reaction introduces a second double bond into the aromatic ring system. The chain is Chorismate synthase from Jannaschia sp. (strain CCS1).